Consider the following 1620-residue polypeptide: Putative zinc carboxypeptidase (1620 aa).

Topologically, residues 1–1367 (MLFKNEDSGN…SYDFLYFDEN (1367 aa)) are extracellular. Asn-19 is a glycosylation site (N-linked (GlcNAc...) asparagine). The interval 32 to 74 (RNDNKNNDNEDNKQDDEEKNDEDDNKSNLLLEENEENKRQGDK) is disordered. A compositionally biased stretch (basic and acidic residues) spans 33–43 (NDNKNNDNEDN). Residues 44–55 (KQDDEEKNDEDD) are compositionally biased toward acidic residues. 2 N-linked (GlcNAc...) asparagine glycosylation sites follow: Asn-56 and Asn-102. A disordered region spans residues 309 to 328 (GNHYDAHESTNTYDEEKTRE). Residues Asn-354, Asn-487, Asn-508, Asn-529, Asn-550, Asn-571, Asn-589, Asn-687, Asn-802, and Asn-1010 are each glycosylated (N-linked (GlcNAc...) asparagine). The interval 497-559 (VNNLDSTVNY…NSTGNNINNI (63 aa)) is possible malaria epitope. A Peptidase M14 domain is found at 1004–1261 (GENKKNNGTK…FYVQNYFEGY (258 aa)). 2 residues coordinate Zn(2+): His-1059 and Glu-1062. 2 N-linked (GlcNAc...) asparagine glycosylation sites follow: Asn-1064 and Asn-1141. His-1155 provides a ligand contact to Zn(2+). The Proton donor/acceptor role is filled by Glu-1229. The tract at residues 1279–1329 (NIKGDDNINGDDNIKGGDNIKGDDNIKRDDNFQRDDNFQRDDNFQRGDNFH) is disordered. Residues 1368 to 1388 (LLFMTGVSFGICLFKFINFLS) form a helical membrane-spanning segment. Topologically, residues 1389–1620 (YHKSSICRRT…SKRKKVIVIL (232 aa)) are cytoplasmic. The interval 1560–1620 (PNGKYKGPGF…SKRKKVIVIL (61 aa)) is disordered. Positions 1581–1597 (NKNESKTEKKSKTENKS) are enriched in basic and acidic residues. A compositionally biased stretch (basic residues) spans 1598-1620 (KSKSKNKSKSKNKSKRKKVIVIL).

It belongs to the peptidase M14 family. The cofactor is Zn(2+).

It localises to the membrane. This is Putative zinc carboxypeptidase from Plasmodium falciparum (isolate 3D7).